The following is a 147-amino-acid chain: MRLTIVSVGHKMPDWVATATHDYIKRMPADCSIEIKEIKPDLTPAKEAVKIAAAIPKGSRVIALDERGKDQTTQHLATQLAGWRQEGFDITFLIGGADGLDPSLKTNAQAMWRLSSLTLPHAMARVLLVEQLYRAWTILQGHPYHRE.

S-adenosyl-L-methionine-binding positions include Leu64, Gly95, and 114-119; that span reads LSSLTL.

It belongs to the RNA methyltransferase RlmH family. As to quaternary structure, homodimer.

It is found in the cytoplasm. The enzyme catalyses pseudouridine(1915) in 23S rRNA + S-adenosyl-L-methionine = N(3)-methylpseudouridine(1915) in 23S rRNA + S-adenosyl-L-homocysteine + H(+). Specifically methylates the pseudouridine at position 1915 (m3Psi1915) in 23S rRNA. In Polynucleobacter asymbioticus (strain DSM 18221 / CIP 109841 / QLW-P1DMWA-1) (Polynucleobacter necessarius subsp. asymbioticus), this protein is Ribosomal RNA large subunit methyltransferase H.